A 2090-amino-acid polypeptide reads, in one-letter code: Nuclear pore complex protein Nup205 (2090 aa).

Belongs to the NUP186/NUP192/NUP205 family. In terms of assembly, part of the nuclear pore complex (NPC).

It is found in the nucleus. It localises to the nuclear pore complex. In terms of biological role, plays a role in the nuclear pore complex (NPC) assembly and maintenance, but with limited role in NPC permeability. Required for specific nuclear import pathways such as Mad import. The chain is Nuclear pore complex protein Nup205 from Drosophila melanogaster (Fruit fly).